Here is a 231-residue protein sequence, read N- to C-terminus: Probable methylthioribulose-1-phosphate dehydratase (231 aa).

Substrate is bound at residue Cys82. Residues His100 and His102 each coordinate Zn(2+). The active-site Proton donor/acceptor is Glu123. Residue His181 coordinates Zn(2+).

The protein belongs to the aldolase class II family. MtnB subfamily. Zn(2+) serves as cofactor.

Its subcellular location is the cytoplasm. The enzyme catalyses 5-(methylsulfanyl)-D-ribulose 1-phosphate = 5-methylsulfanyl-2,3-dioxopentyl phosphate + H2O. Its pathway is amino-acid biosynthesis; L-methionine biosynthesis via salvage pathway; L-methionine from S-methyl-5-thio-alpha-D-ribose 1-phosphate: step 2/6. Catalyzes the dehydration of methylthioribulose-1-phosphate (MTRu-1-P) into 2,3-diketo-5-methylthiopentyl-1-phosphate (DK-MTP-1-P). The polypeptide is Probable methylthioribulose-1-phosphate dehydratase (Dictyostelium discoideum (Social amoeba)).